The chain runs to 610 residues: Glutamine--fructose-6-phosphate aminotransferase [isomerizing] (610 aa).

Residue cysteine 2 is the Nucleophile; for GATase activity of the active site. The region spanning 2 to 218 is the Glutamine amidotransferase type-2 domain; that stretch reads CGIVGAVAQR…EGDVAEITRR (217 aa). SIS domains lie at 286-426 and 459-600; these read AVEI…QQNR and LAPD…VDQP. Residue lysine 605 is the For Fru-6P isomerization activity of the active site.

As to quaternary structure, homodimer.

The protein localises to the cytoplasm. It carries out the reaction D-fructose 6-phosphate + L-glutamine = D-glucosamine 6-phosphate + L-glutamate. Catalyzes the first step in hexosamine metabolism, converting fructose-6P into glucosamine-6P using glutamine as a nitrogen source. The chain is Glutamine--fructose-6-phosphate aminotransferase [isomerizing] from Aliivibrio fischeri (strain ATCC 700601 / ES114) (Vibrio fischeri).